The chain runs to 130 residues: Protachykinin-1 (130 aa).

The signal sequence occupies residues 1–19; sequence MKILVAVAVIFFISTQLSA. The propeptide occupies 20 to 56; the sequence is EEIGANDDFNYWSDWSDSDQIKEEMPEPFEHLLQRIA. Methionine amide is present on residues M68 and M107.

It belongs to the tachykinin family. Post-translationally, the substance P form is cleaved at Pro-59 by the prolyl endopeptidase FAP (seprase) activity (in vitro). Substance P is also cleaved and degraded by Angiotensin-converting enzyme (ACE) and neprilysin (MME).

The protein localises to the secreted. Its function is as follows. Tachykinins are active peptides which excite neurons, evoke behavioral responses, are potent vasodilators and secretagogues, and contract (directly or indirectly) many smooth muscles. This chain is Protachykinin-1 (TAC1), found in Bos taurus (Bovine).